The primary structure comprises 428 residues: Serine--tRNA ligase (428 aa).

231–233 (TAE) provides a ligand contact to L-serine. Residue 262–264 (RAE) participates in ATP binding. Position 285 (E285) interacts with L-serine. Residue 349 to 352 (EISS) coordinates ATP. Residue S385 coordinates L-serine.

It belongs to the class-II aminoacyl-tRNA synthetase family. Type-1 seryl-tRNA synthetase subfamily. In terms of assembly, homodimer. The tRNA molecule binds across the dimer.

The protein localises to the cytoplasm. The catalysed reaction is tRNA(Ser) + L-serine + ATP = L-seryl-tRNA(Ser) + AMP + diphosphate + H(+). It carries out the reaction tRNA(Sec) + L-serine + ATP = L-seryl-tRNA(Sec) + AMP + diphosphate + H(+). Its pathway is aminoacyl-tRNA biosynthesis; selenocysteinyl-tRNA(Sec) biosynthesis; L-seryl-tRNA(Sec) from L-serine and tRNA(Sec): step 1/1. Catalyzes the attachment of serine to tRNA(Ser). Is also able to aminoacylate tRNA(Sec) with serine, to form the misacylated tRNA L-seryl-tRNA(Sec), which will be further converted into selenocysteinyl-tRNA(Sec). The chain is Serine--tRNA ligase from Methylorubrum extorquens (strain CM4 / NCIMB 13688) (Methylobacterium extorquens).